A 158-amino-acid chain; its full sequence is Transcription elongation factor GreA (158 aa).

Residues 5–75 (EKLPMLAEGY…DLEDRVSRAQ (71 aa)) are a coiled coil.

This sequence belongs to the GreA/GreB family.

Necessary for efficient RNA polymerase transcription elongation past template-encoded arresting sites. The arresting sites in DNA have the property of trapping a certain fraction of elongating RNA polymerases that pass through, resulting in locked ternary complexes. Cleavage of the nascent transcript by cleavage factors such as GreA or GreB allows the resumption of elongation from the new 3'terminus. GreA releases sequences of 2 to 3 nucleotides. The polypeptide is Transcription elongation factor GreA (Novosphingobium aromaticivorans (strain ATCC 700278 / DSM 12444 / CCUG 56034 / CIP 105152 / NBRC 16084 / F199)).